The following is a 114-amino-acid chain: Putative antiporter subunit mnhC2 (114 aa).

3 consecutive transmembrane segments (helical) span residues Leu-3 to Ile-23, Ile-28 to Thr-48, and Ala-72 to Val-92.

It belongs to the CPA3 antiporters (TC 2.A.63) subunit C family. In terms of assembly, may form a heterooligomeric complex that consists of seven subunits: mnhA2, mnhB2, mnhC2, mnhD2, mnhE2, mnhF2 and mnhG2.

It localises to the cell membrane. The protein is Putative antiporter subunit mnhC2 (mnhC2) of Staphylococcus aureus (strain Mu3 / ATCC 700698).